A 622-amino-acid polypeptide reads, in one-letter code: Low affinity potassium transport system protein Kup (622 aa).

Transmembrane regions (helical) follow at residues Leu-9–Leu-29, Val-49–Leu-69, Val-101–Pro-121, Pro-137–Ile-157, Val-165–Ala-185, Ala-212–Tyr-232, Trp-247–Leu-267, Leu-279–Ile-299, Ile-337–Phe-357, Leu-363–Cys-383, Ala-397–Val-417, and Ile-419–Thr-439.

The protein belongs to the HAK/KUP transporter (TC 2.A.72) family.

It localises to the cell inner membrane. It catalyses the reaction K(+)(in) + H(+)(in) = K(+)(out) + H(+)(out). In terms of biological role, responsible for the low-affinity transport of potassium into the cell. Likely operates as a K(+):H(+) symporter. The polypeptide is Low affinity potassium transport system protein Kup (Pectobacterium carotovorum subsp. carotovorum (strain PC1)).